The primary structure comprises 58 residues: Galectin-1 (58 aa).

In terms of domain architecture, Galectin spans 2-58 (GITXTSLHVAPGARLAVKGDIPAGAKSWVINLGKGENDIMLHFNARFDAHGDIRTIV). A beta-D-galactoside contacts are provided by residues 43–47 (HFNAR) and His-51.

Monomer. As to expression, detected in most tissues, most abundantly in skin.

The protein localises to the secreted. Its subcellular location is the extracellular space. It localises to the extracellular matrix. May regulate cell apoptosis and cell differentiation. Binds beta-galactoside and a wide array of complex carbohydrates. This is Galectin-1 from Podarcis hispanicus (Iberian wall lizard).